We begin with the raw amino-acid sequence, 20 residues long: 23 kDa cell wall protein (20 aa).

The protein localises to the secreted. Its subcellular location is the cell wall. This is 23 kDa cell wall protein from Solanum lycopersicum (Tomato).